Reading from the N-terminus, the 262-residue chain is pFDCC methylesterase MES16 (262 aa).

Residue Ser-87 is the Acyl-ester intermediate of the active site. Active-site charge relay system residues include Asp-211 and His-239.

This sequence belongs to the AB hydrolase superfamily. Methylesterase family.

It is found in the cytoplasm. The enzyme catalyses methyl (indol-3-yl)acetate + H2O = (indol-3-yl)acetate + methanol + H(+). The catalysed reaction is methyl (-)-jasmonate + H2O = jasmonate + methanol + H(+). It catalyses the reaction primary fluorescent dioxobilin-type chlorophyll catabolite + H2O = O13(4)-desmethyl pFDCC + methanol + H(+). It functions in the pathway plant hormone biosynthesis. It participates in lipid metabolism; oxylipin biosynthesis. Its pathway is porphyrin-containing compound metabolism; chlorophyll degradation. In terms of biological role, involved in the chlorophyll breakdown by its action in fluorescent chlorophyll catabolites (FCCs) demethylation. Demethylates the C13(2)-carboxymethyl group present at the isocyclic ring of chlorophyll. Uses primary fluorescent dioxobilin-type chlorophyll catabolite (pFDCC) as substrate to produce O13(4)-desmethyl pFDCC. Also able to catalyze pheophorbides in vitro. Methylesterase shown to have carboxylesterase activity, methyl indole-3-acetic acid (MeIAA) esterase activity and methyl jasmonate (MeJA) esterase activity in vitro. The sequence is that of pFDCC methylesterase MES16 from Arabidopsis thaliana (Mouse-ear cress).